The sequence spans 139 residues: Crossover junction endodeoxyribonuclease Hje (139 aa).

Mg(2+) contacts are provided by E10, D39, and E52.

Belongs to the Holliday junction resolvase Hjc family. Hje subfamily. In terms of assembly, homodimer. The cofactor is Mg(2+).

The enzyme catalyses Endonucleolytic cleavage at a junction such as a reciprocal single-stranded crossover between two homologous DNA duplexes (Holliday junction).. Functionally, a structure-specific endonuclease that resolves Holliday junction (HJ) intermediates during genetic recombination. Acts only on 4-way DNA junctions in a sequence non-specific manner; introduces paired nicks in opposing strands 2 bases 3' of the point of strand exchange only on continuous strands of 4-way junction DNA. Cleaves both mobile and immobile junctions. Redundant function with Holliday junction resolvase Hjc. The sequence is that of Crossover junction endodeoxyribonuclease Hje from Sulfolobus acidocaldarius (strain ATCC 33909 / DSM 639 / JCM 8929 / NBRC 15157 / NCIMB 11770).